Here is a 711-residue protein sequence, read N- to C-terminus: Denticleless protein homolog B (711 aa).

3 WD repeats span residues 47 to 89 (GRAV…MQRL), 96 to 135 (AHTN…LIGE), and 138 to 178 (GHQC…KDGF). Residues 168–171 (WDTR) carry the DDB1-binding motif motif. A Nuclear localization signal motif is present at residues 197-204 (PSKVKKRK). WD repeat units lie at residues 215–254 (DSQQ…STYR), 270–309 (TRKL…TDPV), 314–355 (GHQN…AAPI), and 359–398 (GHCQ…SEDS). Residues 244-247 (WDLR) carry the DDB1-binding motif motif. Disordered stretches follow at residues 473–524 (QTPK…AFTP) and 601–698 (EFDQ…TPGS). 2 stretches are compositionally biased toward polar residues: residues 504–516 (TPKS…SKTP) and 606–627 (LSPS…TLSP). Over residues 631-642 (MKSDFVDKENSS) the composition is skewed to basic and acidic residues. A compositionally biased stretch (low complexity) spans 658–675 (DNSSPQFKSSSSPSSRNS). Positions 684–697 (NAPNSPVSVPTTPG) are enriched in polar residues.

This sequence belongs to the WD repeat cdt2 family. As to quaternary structure, component of the DCX(DTL) E3 ubiquitin ligase complex, at least composed of cul4 (cul4a or cul4b), ddb1, dtl/cdt2 and rbx1.

It localises to the nucleus. The protein localises to the cytoplasm. Its subcellular location is the cytoskeleton. It is found in the microtubule organizing center. The protein resides in the centrosome. It localises to the chromosome. The protein operates within protein modification; protein ubiquitination. Functionally, substrate-specific adapter of a DCX (DDB1-CUL4-X-box) E3 ubiquitin-protein ligase complex required for cell cycle control, DNA damage response and translesion DNA synthesis. The DCX(DTL) complex, also named CRL4(CDT2) complex, mediates the polyubiquitination and subsequent degradation of CDT1, CDKN1A/p21(CIP1), KMT5A and SDE2. CDT1 degradation in response to DNA damage is necessary to ensure proper cell cycle regulation of DNA replication. CDKN1A/p21(CIP1) degradation during S phase or following UV irradiation is essential to control replication licensing. KMT5A degradation is also important for a proper regulation of mechanisms such as TGF-beta signaling, cell cycle progression, DNA repair and cell migration. Most substrates require their interaction with PCNA for their polyubiquitination: substrates interact with PCNA via their PIP-box, and those containing the 'K+4' motif in the PIP box, recruit the DCX(DTL) complex, leading to their degradation. In undamaged proliferating cells, the DCX(DTL) complex also promotes the 'Lys-164' monoubiquitination of PCNA, thereby being involved in PCNA-dependent translesion DNA synthesis. May play a role in the regulation of the circadian clock. In Xenopus laevis (African clawed frog), this protein is Denticleless protein homolog B (dtl-b).